The primary structure comprises 432 residues: C(50) beta-cyclic carotenoids biosynthesis protein LbtBC (432 aa).

Residues 1-140 (MTSLYTTLNL…DDDEVRTPER (140 aa)) are beta-cyclase. 3 helical membrane-spanning segments follow: residues 4–24 (LYTTLNLTMSIPVVAVALLAA), 36–56 (LIGVGGALLILMILTAVFDNI), and 83–103 (FAYAVAAAVFVPSVWALLTAS). Residues 111–140 (GSPTVSGRGDALLTRAPEPGDDDEVRTPER) are disordered. The tract at residues 141–432 (PGTPGLLTTL…IVLWSVLVWS (292 aa)) is elongase/hydratase. 7 helical membrane passes run 170-190 (YFLATGGFDLVGVIGTIFFLV), 252-272 (ESSLWLAASAFAVIAYSAKGL), 277-297 (IPFLDSLTSAFHFVSPAIVGW), 299-319 (IAGAELTGGVWACLIAFMLWG), 350-370 (AAVWFALACYVAAVVVLLAAA), 374-394 (ASGAAFAILPYLATVAAYVGV), and 409-429 (FLVLNMLAGFCVTQIVLWSVL).

This sequence belongs to the UbiA prenyltransferase family. As to quaternary structure, may form a complex with LbtA.

It localises to the cell membrane. The catalysed reaction is all-trans-lycopene + dimethylallyl diphosphate + H2O = dihydroisopentenyldehydrorhodopin + diphosphate. It catalyses the reaction isopentenyldehydrorhodopin + dimethylallyl diphosphate + H2O = dihydrobisanhydrobacterioruberin + diphosphate. Its pathway is carotenoid biosynthesis. In terms of biological role, involved in the biosynthesis of C(50) beta-cyclic carotenoids. The elongase/hydratase domain catalyzes the elongation of lycopene by attaching a C(5) isoprene unit at C-2, as well as the hydroxylation of the previous end of the molecule. The enzyme acts at both ends of the substrate, and catalyzes the conversion of lycopene to the C(45) intermediate dihydroisopentenyldehydrorhodopin (DH-IDR) and the conversion of isopentenyldehydrorhodopin (IDR) to the C(50) carotenoid dihydrobisanhydrobacterioruberin (DH-BABR). The beta-cyclase domain may produce the C(50) beta-cyclic carotenoid C.p.450 from the C(50) carotenoid dihydrobisanhydrobacterioruberin (DH-BABR). The protein is C(50) beta-cyclic carotenoids biosynthesis protein LbtBC of Dietzia sp. (strain CQ4).